Here is a 548-residue protein sequence, read N- to C-terminus: Chaperonin GroEL (548 aa).

Residues 30–33 (TLGP), lysine 51, 87–91 (DGTTT), glycine 415, 479–481 (NAA), and aspartate 495 each bind ATP.

Belongs to the chaperonin (HSP60) family. In terms of assembly, forms a cylinder of 14 subunits composed of two heptameric rings stacked back-to-back. Interacts with the co-chaperonin GroES.

The protein localises to the cytoplasm. The catalysed reaction is ATP + H2O + a folded polypeptide = ADP + phosphate + an unfolded polypeptide.. Its function is as follows. Together with its co-chaperonin GroES, plays an essential role in assisting protein folding. The GroEL-GroES system forms a nano-cage that allows encapsulation of the non-native substrate proteins and provides a physical environment optimized to promote and accelerate protein folding. The sequence is that of Chaperonin GroEL from Salmonella gallinarum (strain 287/91 / NCTC 13346).